The chain runs to 108 residues: MLKTTLLFFVTALCEIIGCFLPWLWLKRGASVWWLLPAAASLALFVWLLTLHPAASGRVYAAYGGVYVCTALLWLRVVDGVRLTVYDWCGALIALCGMLIIVVGWGRT.

Residues 1-5 (MLKTT) lie on the Periplasmic side of the membrane. The helical transmembrane segment at 6–26 (LLFFVTALCEIIGCFLPWLWL) threads the bilayer. Residues 27–30 (KRGA) are Cytoplasmic-facing. The chain crosses the membrane as a helical span at residues 31–51 (SVWWLLPAAASLALFVWLLTL). Over 52–60 (HPAASGRVY) the chain is Periplasmic. The helical transmembrane segment at 61–81 (AAYGGVYVCTALLWLRVVDGV) threads the bilayer. At 82-84 (RLT) the chain is on the cytoplasmic side. The chain crosses the membrane as a helical span at residues 85–105 (VYDWCGALIALCGMLIIVVGW). At 106–108 (GRT) the chain is on the periplasmic side.

This sequence belongs to the UPF0060 family.

It is found in the cell inner membrane. The sequence is that of UPF0060 membrane protein YnfA from Salmonella agona (strain SL483).